The sequence spans 621 residues: DNA mismatch repair protein MutL (621 aa).

This sequence belongs to the DNA mismatch repair MutL/HexB family.

Functionally, this protein is involved in the repair of mismatches in DNA. It is required for dam-dependent methyl-directed DNA mismatch repair. May act as a 'molecular matchmaker', a protein that promotes the formation of a stable complex between two or more DNA-binding proteins in an ATP-dependent manner without itself being part of a final effector complex. This is DNA mismatch repair protein MutL from Xylella fastidiosa (strain M12).